The chain runs to 270 residues: Bis(5'-nucleosyl)-tetraphosphatase, symmetrical (270 aa).

Belongs to the Ap4A hydrolase family.

It catalyses the reaction P(1),P(4)-bis(5'-adenosyl) tetraphosphate + H2O = 2 ADP + 2 H(+). Its function is as follows. Hydrolyzes diadenosine 5',5'''-P1,P4-tetraphosphate to yield ADP. The chain is Bis(5'-nucleosyl)-tetraphosphatase, symmetrical from Cellvibrio japonicus (strain Ueda107) (Pseudomonas fluorescens subsp. cellulosa).